We begin with the raw amino-acid sequence, 298 residues long: uncharacterized protein (298 aa).

One can recognise an ABC transporter domain in the interval 2-229 (LTIDHVTKTF…FGKKNVTIHS (228 aa)). Position 34-41 (34-41 (GANGAGKT)) interacts with ATP.

This sequence belongs to the ABC transporter superfamily.

It localises to the cell membrane. This is an uncharacterized protein from Bacillus subtilis (strain 168).